The following is a 704-amino-acid chain: Phosphoribosylformylglycinamidine synthase subunit PurL (704 aa).

H32 is an active-site residue. Y35 is a binding site for ATP. Position 76 (E76) interacts with Mg(2+). Substrate is bound by residues 77–80 and R99; that span reads SHNH. Catalysis depends on H78, which acts as the Proton acceptor. D100 is a Mg(2+) binding site. A substrate-binding site is contributed by Q224. Mg(2+) is bound at residue D252. 296–298 contacts substrate; sequence ESQ. ATP contacts are provided by D471 and G508. N509 provides a ligand contact to Mg(2+). S511 provides a ligand contact to substrate.

This sequence belongs to the FGAMS family. Monomer. Part of the FGAM synthase complex composed of 1 PurL, 1 PurQ and 2 PurS subunits.

It is found in the cytoplasm. The enzyme catalyses N(2)-formyl-N(1)-(5-phospho-beta-D-ribosyl)glycinamide + L-glutamine + ATP + H2O = 2-formamido-N(1)-(5-O-phospho-beta-D-ribosyl)acetamidine + L-glutamate + ADP + phosphate + H(+). Its pathway is purine metabolism; IMP biosynthesis via de novo pathway; 5-amino-1-(5-phospho-D-ribosyl)imidazole from N(2)-formyl-N(1)-(5-phospho-D-ribosyl)glycinamide: step 1/2. Functionally, part of the phosphoribosylformylglycinamidine synthase complex involved in the purines biosynthetic pathway. Catalyzes the ATP-dependent conversion of formylglycinamide ribonucleotide (FGAR) and glutamine to yield formylglycinamidine ribonucleotide (FGAM) and glutamate. The FGAM synthase complex is composed of three subunits. PurQ produces an ammonia molecule by converting glutamine to glutamate. PurL transfers the ammonia molecule to FGAR to form FGAM in an ATP-dependent manner. PurS interacts with PurQ and PurL and is thought to assist in the transfer of the ammonia molecule from PurQ to PurL. The polypeptide is Phosphoribosylformylglycinamidine synthase subunit PurL (Pyrococcus furiosus (strain ATCC 43587 / DSM 3638 / JCM 8422 / Vc1)).